Consider the following 416-residue polypeptide: Argininosuccinate synthase (416 aa).

ATP contacts are provided by residues alanine 11–serine 19 and alanine 37. Residue tyrosine 88 participates in L-citrulline binding. Residues tyrosine 88 and tyrosine 114 each carry the phosphotyrosine modification. ATP is bound at residue alanine 116–asparagine 124. Residues threonine 120, asparagine 124, and aspartate 125 each contribute to the L-aspartate site. Asparagine 124 serves as a coordination point for L-citrulline. L-citrulline contacts are provided by arginine 128, serine 181, serine 190, glutamate 271, and tyrosine 283. Position 181 is a phosphoserine (serine 181).

It belongs to the argininosuccinate synthase family. In terms of assembly, homotetramer.

Its subcellular location is the cytoplasm. It localises to the cytosol. It catalyses the reaction L-citrulline + L-aspartate + ATP = 2-(N(omega)-L-arginino)succinate + AMP + diphosphate + H(+). It participates in amino-acid biosynthesis; L-arginine biosynthesis; L-arginine from L-ornithine and carbamoyl phosphate: step 2/3. It functions in the pathway nitrogen metabolism; urea cycle; (N(omega)-L-arginino)succinate from L-aspartate and L-citrulline: step 1/1. In terms of biological role, one of the enzymes of the urea cycle, the metabolic pathway transforming neurotoxic amonia produced by protein catabolism into inocuous urea in the liver of ureotelic animals. Catalyzes the formation of arginosuccinate from aspartate, citrulline and ATP and together with ASL it is responsible for the biosynthesis of arginine in most body tissues. The chain is Argininosuccinate synthase from Gallus gallus (Chicken).